A 221-amino-acid chain; its full sequence is Cytidylate kinase (221 aa).

Residue Gly-7–Ser-15 coordinates ATP.

It belongs to the cytidylate kinase family. Type 1 subfamily.

The protein resides in the cytoplasm. The catalysed reaction is CMP + ATP = CDP + ADP. The enzyme catalyses dCMP + ATP = dCDP + ADP. This is Cytidylate kinase from Borreliella burgdorferi (strain ZS7) (Borrelia burgdorferi).